The chain runs to 118 residues: Small ribosomal subunit protein uS13 (118 aa).

Positions 94 to 118 (GLPVRGQRTKTNARTRKGPRKPIKK) are disordered.

It belongs to the universal ribosomal protein uS13 family. In terms of assembly, part of the 30S ribosomal subunit. Forms a loose heterodimer with protein S19. Forms two bridges to the 50S subunit in the 70S ribosome.

Its function is as follows. Located at the top of the head of the 30S subunit, it contacts several helices of the 16S rRNA. In the 70S ribosome it contacts the 23S rRNA (bridge B1a) and protein L5 of the 50S subunit (bridge B1b), connecting the 2 subunits; these bridges are implicated in subunit movement. Contacts the tRNAs in the A and P-sites. This is Small ribosomal subunit protein uS13 from Haemophilus ducreyi (strain 35000HP / ATCC 700724).